A 364-amino-acid chain; its full sequence is Flagellar P-ring protein (364 aa).

Positions 1-21 (MNVFKVFCLMVLLGWQLPAMA) are cleaved as a signal peptide.

Belongs to the FlgI family. In terms of assembly, the basal body constitutes a major portion of the flagellar organelle and consists of four rings (L,P,S, and M) mounted on a central rod.

The protein resides in the periplasm. It localises to the bacterial flagellum basal body. Its function is as follows. Assembles around the rod to form the L-ring and probably protects the motor/basal body from shearing forces during rotation. The sequence is that of Flagellar P-ring protein from Pseudoalteromonas translucida (strain TAC 125).